A 339-amino-acid chain; its full sequence is Phospho-N-acetylmuramoyl-pentapeptide-transferase (339 aa).

Transmembrane regions (helical) follow at residues 4–24 (TTIIAGIISFILTILAMPFFI), 53–73 (MGGTVFLLVAALVTFICAFVL), 80–100 (AFGATLAILFIVLIYGTIGFL), 113–133 (GLTAWQKMALQLIGGLVFYLV), 145–165 (LFGFPLHLGVFYIIFILFWVV), 176–196 (GIDGLASISVVISLLTYSVIA), 202–222 (FDVLLIIISMVGALLGFFVYN), 228–248 (VFMGDVGSLALGAMLAAISIT), 253–273 (WTLLIIGIVYVLETASVMLQV), and 318–338 (VDFFLWSIGLLGSLLILAILY).

It belongs to the glycosyltransferase 4 family. MraY subfamily. Mg(2+) serves as cofactor.

The protein localises to the cell membrane. It catalyses the reaction UDP-N-acetyl-alpha-D-muramoyl-L-alanyl-gamma-D-glutamyl-L-lysyl-D-alanyl-D-alanine + di-trans,octa-cis-undecaprenyl phosphate = Mur2Ac(oyl-L-Ala-gamma-D-Glu-L-Lys-D-Ala-D-Ala)-di-trans,octa-cis-undecaprenyl diphosphate + UMP. It participates in cell wall biogenesis; peptidoglycan biosynthesis. Functionally, catalyzes the initial step of the lipid cycle reactions in the biosynthesis of the cell wall peptidoglycan: transfers peptidoglycan precursor phospho-MurNAc-pentapeptide from UDP-MurNAc-pentapeptide onto the lipid carrier undecaprenyl phosphate, yielding undecaprenyl-pyrophosphoryl-MurNAc-pentapeptide, known as lipid I. This chain is Phospho-N-acetylmuramoyl-pentapeptide-transferase, found in Streptococcus mutans serotype c (strain ATCC 700610 / UA159).